We begin with the raw amino-acid sequence, 658 residues long: Protein teflon (658 aa).

A C2H2-type 1 zinc finger spans residues 33–56 (LYCHFCRDLFTQLPEFLRHLQSNH). Positions 80–131 (DKAHEDAQSAGHNSSSGDSRSLMNSEDSRAIDGSEENSDNSPVKPEQIGKQN) are disordered. The span at 89 to 104 (AGHNSSSGDSRSLMNS) shows a compositional bias: polar residues. 2 consecutive C2H2-type zinc fingers follow at residues 608-630 (YFCK…LISH) and 634-657 (FQCT…RNAH).

Belongs to the Teflon family.

The protein localises to the nucleus. It is found in the chromosome. In terms of biological role, specifically required in males for proper segregation of autosomal bivalents at meiosis I. Expression is required in the male germ line prior to spermatocyte stage S4. May have a role as a bridging molecule maintaining adhesion to hold autosome bivalents together via heterochromatic connections. This chain is Protein teflon, found in Drosophila simulans (Fruit fly).